The sequence spans 391 residues: Thioredoxin-interacting protein (391 aa).

A Glycyl lysine isopeptide (Lys-Gly) (interchain with G-Cter in ubiquitin) cross-link involves residue Lys212. At Ser361 the chain carries Phosphoserine.

It belongs to the arrestin family. Homodimer; disulfide-linked. Interacts with TXN/thioredoxin through its redox-active site. Interacts with transcriptional repressors ZBTB16, ZBTB32 and HDAC1. Interacts with DDIT4. Ubiquitinated; undergoes heterotypic 'Lys-48'-/'Lys-63'-branched polyubiquitination catalyzed by ITCH and UBR5 resulting in proteasomal degradation. Deubiquitinated by USP5, leading to TXNIP stabilization.

The protein localises to the cytoplasm. Its subcellular location is the nucleus. May act as an oxidative stress mediator by inhibiting thioredoxin activity or by limiting its bioavailability. Interacts with COPS5 and restores COPS5-induced suppression of CDKN1B stability, blocking the COPS5-mediated translocation of CDKN1B from the nucleus to the cytoplasm. Functions as a transcriptional repressor, possibly by acting as a bridge molecule between transcription factors and corepressor complexes, and over-expression will induce G0/G1 cell cycle arrest. Required for the maturation of natural killer cells. Acts as a suppressor of tumor cell growth. Inhibits the proteasomal degradation of DDIT4, and thereby contributes to the inhibition of the mammalian target of rapamycin complex 1 (mTORC1). This Homo sapiens (Human) protein is Thioredoxin-interacting protein (TXNIP).